The chain runs to 139 residues: ATP synthase epsilon chain (139 aa).

It belongs to the ATPase epsilon chain family. As to quaternary structure, F-type ATPases have 2 components, CF(1) - the catalytic core - and CF(0) - the membrane proton channel. CF(1) has five subunits: alpha(3), beta(3), gamma(1), delta(1), epsilon(1). CF(0) has three main subunits: a, b and c.

It localises to the cell membrane. Produces ATP from ADP in the presence of a proton gradient across the membrane. The polypeptide is ATP synthase epsilon chain (Ligilactobacillus salivarius (strain UCC118) (Lactobacillus salivarius)).